Reading from the N-terminus, the 48-residue chain is Large ribosomal subunit protein eL40 (48 aa).

This sequence belongs to the eukaryotic ribosomal protein eL40 family.

The protein is Large ribosomal subunit protein eL40 of Methanobrevibacter smithii (strain ATCC 35061 / DSM 861 / OCM 144 / PS).